We begin with the raw amino-acid sequence, 599 residues long: DNA primase (599 aa).

The CHC2-type zinc finger occupies 38–62; sequence CPFHDEKTPSFTVSEDKQICHCFGC. The Toprim domain occupies 260 to 341; sequence DEIVLLEGFM…NVFVIQLPSG (82 aa). The Mg(2+) site is built by glutamate 266, aspartate 310, and aspartate 312.

The protein belongs to the DnaG primase family. In terms of assembly, monomer. Interacts with DnaB. Zn(2+) serves as cofactor. Requires Mg(2+) as cofactor.

The catalysed reaction is ssDNA + n NTP = ssDNA/pppN(pN)n-1 hybrid + (n-1) diphosphate.. RNA polymerase that catalyzes the synthesis of short RNA molecules used as primers for DNA polymerase during DNA replication. The polypeptide is DNA primase (Staphylococcus aureus (strain COL)).